The chain runs to 52 residues: Eukaryotic translation initiation factor 2 subunit 1 (52 aa).

Residues 16–52 (EDVVMVNVRSIAEMGAYVSLLEYNNIEGRILLSELSR) form the S1 motif domain. The residue at position 48 (Ser-48) is a Phosphoserine; by HRI. Residue Ser-51 is modified to Phosphoserine.

The protein belongs to the eIF-2-alpha family. As to quaternary structure, eukaryotic translation initiation factor 2 eIF2 is a heterotrimeric complex composed of an alpha (EIF2S1), a beta (EIF2S2) and a gamma (EIF2S3) chain. eIF2 is member of the 43S pre-initiation complex (43S PIC). eIF2 forms a complex with at least CELF1/CUGBP1, CALR, CALR3, EIF2S1, EIF2S2, HSP90B1 and HSPA5. Interaction with METAP2 protects EIF2S1 from inhibitory phosphorylation. Interacts with ABCF1. Associates with ribosomes. Interacts with DDX3X in an RNA-independent manner. Phosphorylation at Ser-48 and Ser-51 stabilizes the eIF-2/GDP/eIF2B complex and prevents GDP/GTP exchange reaction, thus impairing the recycling of eIF-2 between successive rounds of initiation and leading to global inhibition of translation, while concomitantly initiating the preferential translation of integrated stress response (ISR)-specific mRNAs. Substrate for at least 4 kinases: EIF2AK1/HRI, EIF2AK2/PKR, EIF2AK3/PERK and EIF2AK4/GCN2. Phosphorylation on Ser-51 by the EIF2AK4/GCN2 protein kinase occurs in response to amino acid starvation and UV irradiation. Phosphorylation at Ser-51 by the EIF2AK3/PERK protein kinase occurs in response to the unfolded protein response. Phosphorylation at Ser-51 by EIF2AK1/HRI in response to mitochondrial damage promotes relocalization to the mitochondrial surface.

The protein localises to the cytoplasm. Its subcellular location is the stress granule. It is found in the cytosol. It localises to the mitochondrion. With respect to regulation, activity is regulated by phosphorylation at Ser-49 and Ser-52, which stabilizes the eIF2/GDP/eIF2B complex and prevents the eIF2B-mediated exchange of GDP for GTP, thereby preventing the formation of the 43S pre-initiation complex (43S PIC). This results in the global attenuation of 5' cap-dependent protein synthesis and concomitant translation of ISR-specific mRNAs that contain a short upstream open reading frame (uORF) in their 5' UTR, such as ATF4, ATF5, DDIT3/CHOP and PPP1R15A/GADD34. Its function is as follows. Member of the eIF2 complex that functions in the early steps of protein synthesis by forming a ternary complex with GTP and initiator tRNA. This complex binds to a 40S ribosomal subunit, followed by mRNA binding to form a 43S pre-initiation complex. Junction of the 60S ribosomal subunit to form the 80S initiation complex is preceded by hydrolysis of the GTP bound to eIF2 and release of an eIF2-GDP binary complex. In order for eIF2 to recycle and catalyze another round of initiation, the GDP bound to eIF2 must exchange with GTP by way of a reaction catalyzed by eIF2B. EIF2S1/eIF2-alpha is a key component of the integrated stress response (ISR), required for adaptation to various stress: phosphorylation by metabolic-stress sensing protein kinases (EIF2AK1/HRI, EIF2AK2/PKR, EIF2AK3/PERK and EIF2AK4/GCN2) in response to stress converts EIF2S1/eIF2-alpha in a global protein synthesis inhibitor, leading to a attenuation of cap-dependent translation, while concomitantly initiating the preferential translation of ISR-specific mRNAs, such as the transcriptional activators ATF4 and QRICH1, and hence allowing ATF4- and QRICH1-mediated reprogramming. EIF2S1/eIF2-alpha also acts as an activator of mitophagy in response to mitochondrial damage: phosphorylation by EIF2AK1/HRI promotes relocalization to the mitochondrial surface, thereby triggering PRKN-independent mitophagy. This chain is Eukaryotic translation initiation factor 2 subunit 1 (EIF2S1), found in Oryctolagus cuniculus (Rabbit).